The primary structure comprises 181 residues: RNA pyrophosphohydrolase (181 aa).

Residues 6–150 (GYRPNVGIII…KCEVYRCALK (145 aa)) enclose the Nudix hydrolase domain. The short motif at 38-59 (GGIKEGETPEQAMYRELYEEVG) is the Nudix box element.

Belongs to the Nudix hydrolase family. RppH subfamily. A divalent metal cation is required as a cofactor.

Accelerates the degradation of transcripts by removing pyrophosphate from the 5'-end of triphosphorylated RNA, leading to a more labile monophosphorylated state that can stimulate subsequent ribonuclease cleavage. The chain is RNA pyrophosphohydrolase from Psychromonas ingrahamii (strain DSM 17664 / CCUG 51855 / 37).